A 499-amino-acid polypeptide reads, in one-letter code: Zinc finger protein PLAG1 (499 aa).

Positions methionine 1–asparagine 33 are disordered. Residues alanine 2–alanine 84 form an interaction with KPNA2 region. A Nuclear localization signal motif is present at residues lysine 22–arginine 25. 7 consecutive C2H2-type zinc fingers follow at residues phenylalanine 34–histidine 56, tyrosine 62–histidine 86, histidine 92–histidine 114, phenylalanine 121–histidine 143, leucine 150–histidine 172, histidine 185–histidine 207, and phenylalanine 213–histidine 236. Residues lysine 41 to lysine 242 form a decreased nuclear import with localization in the nucleus but also in the cytoplasm region. Residues valine 243 to leucine 383 form a repression domain; contains 3 sumoylation motifs and massively decrease transcription activity region. The tract at residues valine 243 to glutamine 499 is activates transcription; Inhibition of nuclear import due to lack of NLS and KPNA2 interaction. Glycyl lysine isopeptide (Lys-Gly) (interchain with G-Cter in SUMO) cross-links involve residues lysine 244 and lysine 263. The segment at glutamine 364–serine 400 is disordered. A compositionally biased stretch (low complexity) spans serine 369–serine 379. The segment at glutamate 384–glutamine 499 is massively activates transcription.

Belongs to the krueppel C2H2-type zinc-finger protein family. As to quaternary structure, interacts with KPNA2, which escorts protein to the nucleus via interaction with nuclear localization signal. Interacts with E3 SUMO-protein ligase PIAS1, PIAS2 and PIAS4. In terms of processing, sumoylated with SUMO1; which inhibits transcriptional activity, but does not affect nuclear localization. Blockers of sumoylation pathway such as SENP3 and inactive UBE2I increases transcriptional capacity. Sumoylation is increased in the presence of PIAS1. Acetylated by lysine acetyltransferase EP300; which activates transcriptional capacity. Lysine residues that are sumoylated also seem to be target for acetylation. Expressed in heart, spleen, lung, kidney, brain, testis and epididymis but not in salivary glands.

The protein localises to the nucleus. Functionally, transcription factor whose activation results in up-regulation of target genes, such as IGFII, leading to uncontrolled cell proliferation: when overexpressed in cultured cells, higher proliferation rate and transformation are observed. Other target genes such as CRLF1, CRABP2, CRIP2, PIGF are strongly induced in cells with PLAG1 induction. Proto-oncogene whose ectopic expression can trigger the development of pleomorphic adenomas of the salivary gland and lipoblastomas. Cooperates with CBFB-MYH11. The polypeptide is Zinc finger protein PLAG1 (Plag1) (Rattus norvegicus (Rat)).